The chain runs to 324 residues: MLQTTLLYLINPLAYIIPILLATAFLTLIERKILGYMQFRKGPNIVGPYGLLQPIADGLKLFIKEPIRPSASSRSYFLATPTVALALALLMWMPLPLPHSIINLNLGLLFILAISSLTVYTILGSGWASNSKYALMGALRAVAQTISYEVSLGLILLSMIIFAGGFTLHTFNLAQETIWLLIPGWPLAFMWYISTLAETNRAPFDLTEGESELVSGFNIEYAAGPFALFFLAEYTNILLMNTLSVILFMGTSYNPLMPQISSLSLMMKASMLTVLFLWIRASYPRFRYDQLMHLVWKNFLPLTLAIILWHMALPLATTSLPPLT.

Transmembrane regions (helical) follow at residues 9–29 (LINP…LTLI), 43–63 (PNIV…KLFI), 77–97 (FLAT…PLPL), 106–126 (LGLL…LGSG), 146–166 (ISYE…AGGF), 177–197 (TIWL…STLA), 228–248 (LFFL…VILF), 259–279 (QISS…FLWI), and 299–319 (FLPL…ATTS).

This sequence belongs to the complex I subunit 1 family.

It localises to the mitochondrion inner membrane. It catalyses the reaction a ubiquinone + NADH + 5 H(+)(in) = a ubiquinol + NAD(+) + 4 H(+)(out). In terms of biological role, core subunit of the mitochondrial membrane respiratory chain NADH dehydrogenase (Complex I) that is believed to belong to the minimal assembly required for catalysis. Complex I functions in the transfer of electrons from NADH to the respiratory chain. The immediate electron acceptor for the enzyme is believed to be ubiquinone. The polypeptide is NADH-ubiquinone oxidoreductase chain 1 (MT-ND1) (Scyliorhinus canicula (Small-spotted catshark)).